The chain runs to 1445 residues: CD109 antigen (1445 aa).

The N-terminal stretch at M1 to A21 is a signal peptide. N68, N118, N247, N279, N365, N419, N513, and N645 each carry an N-linked (GlcNAc...) asparagine glycan. Positions D593–G702 are bait region (approximate). The segment at residues C921–Q924 is a cross-link (isoglutamyl cysteine thioester (Cys-Gln)). Residues N1086 and N1355 are each glycosylated (N-linked (GlcNAc...) asparagine). Residue A1420 is the site of GPI-anchor amidated alanine attachment. The propeptide at S1421–L1445 is removed in mature form.

Belongs to the protease inhibitor I39 (alpha-2-macroglobulin) family. Heterodimer; disulfide-linked. Interacts with TGFB1 and TGFBR1. Forms a heteromeric complex with TGFBR1, TGFBR2 and TGFBR3 in a ligand-independent manner. In terms of processing, N-glycosylated. Post-translationally, 2 forms of 150 (p150) and 120 kDa (p120) exist due to proteolytic degradation from a 180 kDa form. In terms of tissue distribution, widely expressed with high level in uterus, aorta, heart, lung, trachea, placenta and in fetal heart, kidney, liver, spleen and lung. Expressed by CD34(+) acute myeloid leukemia cell lines, T-cell lines, activated T-lymphoblasts, endothelial cells and activated platelets. Isoform 4 is expressed in placenta. Isoform 1 is expressed in keratinocytes and placenta.

It is found in the cell membrane. Modulates negatively TGFB1 signaling in keratinocytes. The sequence is that of CD109 antigen (CD109) from Homo sapiens (Human).